Reading from the N-terminus, the 802-residue chain is Cullin-4 (802 aa).

Composition is skewed to low complexity over residues 1 to 33 (MNFNNNNNNNNNNNNNNNLNNNNNNVNNINNNN) and 656 to 676 (STSSNTSSNTSSNTSSSASGS). Disordered regions lie at residues 1-43 (MNFN…SLAG) and 656-686 (STSSNTSSNTSSNTSSSASGSASGGASGGAT). A Cullin neddylation domain is found at 734–794 (DRQYQVDAAI…KEYLCRDPEN (61 aa)). A Glycyl lysine isopeptide (Lys-Gly) (interchain with G-Cter in NEDD8) cross-link involves residue lysine 748.

Belongs to the cullin family. In terms of processing, neddylated. Deneddylated via its interaction with the COP9 signalosome (CSN) complex.

It participates in protein modification; protein ubiquitination. Functionally, probable core component of cullin-based SCF-like E3 ubiquitin-protein ligase complexes which mediate the ubiquitination and subsequent proteasomal degradation of target proteins. The E3 ubiquitin-protein ligase activity of the complex is dependent on the neddylation of the cullin subunit. The sequence is that of Cullin-4 (culD) from Dictyostelium discoideum (Social amoeba).